A 242-amino-acid polypeptide reads, in one-letter code: Protein HTATIP2 (242 aa).

Ala2 carries the N-acetylalanine modification. The tract at residues 2 to 25 (ADKETLLKLREDFKMQNKSVFILG) is required for interaction with elongation factor EEF1A1. Residues Ser27, Gly28, Glu29, Thr30, Arg52, Arg53, Leu92, Gly93, Tyr143, Lys147, Leu170, and Arg178 each contribute to the NADPH site. Tyr143 acts as the Proton acceptor in catalysis. Residue Lys147 is part of the active site.

Monomer. Forms homodimers during oxidative stress. Interacts (via N-terminus) with elongation factor EEF1A1 (via middle-region); the interaction is direct and competes with EEF1A1 binding to guanyl-nucleotide exchange factor EEF1B2, thereby inhibiting GDP for GTP exchange and reactivation of EEF1A1. Interacts with nuclear transport receptors XPO4, IPO5/RANBP5, IPO7, IPO9 and KPNB1 as well as GCN1L1/GCN1 and LRPPRC probably through their HEAT repeats. Binds NCOA5/CIA.

Functionally, represses translation by preventing reactivation of elongation factor eEF1A. May also inhibit nuclear import by competing with nuclear import substrates for binding to a subset of nuclear transport receptors. Has additionally been proposed to act as a redox sensor involved in cellular oxidative stress surveillance. May bind NADPH. The sequence is that of Protein HTATIP2 from Rattus norvegicus (Rat).